The primary structure comprises 328 residues: Acyl-CoA wax alcohol acyltransferase 1 (328 aa).

The next 2 helical transmembrane spans lie at 12-32 and 34-53; these read SLSLLQWPLSYVAMFWIVQPL and ICLLFTPLWPLPTVYFVWLL.

This sequence belongs to the diacylglycerol acyltransferase family.

The protein localises to the endoplasmic reticulum membrane. It catalyses the reaction a long chain fatty alcohol + a fatty acyl-CoA = a wax ester + CoA. The catalysed reaction is 1,2-di-(9Z-octadecenoyl)-sn-glycerol + (9Z)-octadecenoyl-CoA = 1,2,3-tri-(9Z-octadecenoyl)-glycerol + CoA. The enzyme catalyses hexadecan-1-ol + (9Z)-octadecenoyl-CoA = hexadecanyl (9Z)-octadecenoate + CoA. It carries out the reaction decan-1-ol + (9Z)-octadecenoyl-CoA = 1-O-decyl-(9Z)-octadecenoate + CoA. It catalyses the reaction (9Z)-hexadecen-1-ol + (9Z)-octadecenoyl-CoA = 1-O-(9Z)-hexadecenyl (9Z)-octadecenoate + CoA. The catalysed reaction is octadecan-1-ol + (9Z)-octadecenoyl-CoA = 1-O-octadecyl (9Z)-octadecenoate + CoA. The enzyme catalyses (9Z)-octadecen-1-ol + (9Z)-octadecenoyl-CoA = 1-O-(9Z)-octadecenyl (9Z)-octadecenoate + CoA. It carries out the reaction hexadecan-1-ol + hexadecanoyl-CoA = hexadecanyl hexadecanoate + CoA. It catalyses the reaction hexadecan-1-ol + (9Z)-hexadecenoyl-CoA = 1-O-hexadecyl (9Z)-hexadecenoate + CoA. The catalysed reaction is hexadecan-1-ol + octadecanoyl-CoA = hexadecanyl octadecanoate + CoA. The enzyme catalyses eicosan-1-ol + (9Z)-octadecenoyl-CoA = 1-O-eicosanyl (9Z)-octadecenoate + CoA. Acyltransferase that catalyzes the formation of ester bonds between fatty alcohols and fatty acyl-CoAs to form wax monoesters. Shows a strong preference for decyl alcohol (C10), with less activity towards C16 and C18 alcohols. Shows a strong preference for saturated acyl-CoAs. In Mus musculus (Mouse), this protein is Acyl-CoA wax alcohol acyltransferase 1 (Awat1).